The chain runs to 193 residues: Cysteine and glycine-rich protein 2 (193 aa).

Residues 10-61 (CGACGRTVYHAEEVQCDGRTFHRCCFLCMVCRKNLDSTTVAIHDEEIYCKSC) enclose the LIM zinc-binding 1 domain. The Nuclear localization signal signature appears at 64–69 (KKYGPK). A Glycyl lysine isopeptide (Lys-Gly) (interchain with G-Cter in SUMO2) cross-link involves residue Lys-91. Lys-112 and Lys-131 each carry N6-acetyllysine. The LIM zinc-binding 2 domain maps to 119 to 170 (CSRCGDSVYAAEKIIGAGKPWHKNCFRCAKCGKSLESTTLTEKEGEIYCKGC). At Lys-137 the chain carries N6-acetyllysine; alternate. Residue Lys-137 is modified to N6-succinyllysine; alternate. N6-acetyllysine is present on Lys-161.

As to quaternary structure, interacts with KAT14. The LIM domain 1 is necessary and sufficient for this interaction. Interacts with GLRX3. In terms of tissue distribution, highly expressed in the aorta; weakly found in the kidney, thymus, and intestine. Barely detectable in brain, testis, esophagus, lung, liver, aortic adventitia, vena cava, or uterus; not present in heart and skeletal muscle.

The protein resides in the nucleus. Drastically down-regulated in response to PDGF-BB or cell injury, that promote smooth muscle cell proliferation and dedifferentiation. Seems to play a role in the development of the embryonic vascular system. In Rattus norvegicus (Rat), this protein is Cysteine and glycine-rich protein 2 (Csrp2).